A 115-amino-acid chain; its full sequence is T cell receptor beta variable 2 (115 aa).

The signal sequence occupies residues 1-19 (MDTWLVCWAIFSLLKAGLT). Positions 21-115 (PEVTQTPSHQ…SAMYFCASSE (95 aa)) constitute an Ig-like domain. Cys42 and Cys111 are joined by a disulfide. A glycan (N-linked (GlcNAc...) asparagine) is linked at Asn93.

In terms of assembly, alpha-beta TR is a heterodimer composed of an alpha and beta chain; disulfide-linked. The alpha-beta TR is associated with the transmembrane signaling CD3 coreceptor proteins to form the TR-CD3 (TcR or TCR). The assembly of alpha-beta TR heterodimers with CD3 occurs in the endoplasmic reticulum where a single alpha-beta TR heterodimer associates with one CD3D-CD3E heterodimer, one CD3G-CD3E heterodimer and one CD247 homodimer forming a stable octameric structure. CD3D-CD3E and CD3G-CD3E heterodimers preferentially associate with TR alpha and TR beta chains, respectively. The association of the CD247 homodimer is the last step of TcR assembly in the endoplasmic reticulum and is required for transport to the cell surface.

It is found in the cell membrane. Functionally, v region of the variable domain of T cell receptor (TR) beta chain that participates in the antigen recognition. Alpha-beta T cell receptors are antigen specific receptors which are essential to the immune response and are present on the cell surface of T lymphocytes. Recognize peptide-major histocompatibility (MH) (pMH) complexes that are displayed by antigen presenting cells (APC), a prerequisite for efficient T cell adaptive immunity against pathogens. Binding of alpha-beta TR to pMH complex initiates TR-CD3 clustering on the cell surface and intracellular activation of LCK that phosphorylates the ITAM motifs of CD3G, CD3D, CD3E and CD247 enabling the recruitment of ZAP70. In turn ZAP70 phosphorylates LAT, which recruits numerous signaling molecules to form the LAT signalosome. The LAT signalosome propagates signal branching to three major signaling pathways, the calcium, the mitogen-activated protein kinase (MAPK) kinase and the nuclear factor NF-kappa-B (NF-kB) pathways, leading to the mobilization of transcription factors that are critical for gene expression and essential for T cell growth and differentiation. The T cell repertoire is generated in the thymus, by V-(D)-J rearrangement. This repertoire is then shaped by intrathymic selection events to generate a peripheral T cell pool of self-MH restricted, non-autoaggressive T cells. Post-thymic interaction of alpha-beta TR with the pMH complexes shapes TR structural and functional avidity. The sequence is that of T cell receptor beta variable 2 from Homo sapiens (Human).